The primary structure comprises 316 residues: Ribosomal protein L11 methyltransferase (316 aa).

S-adenosyl-L-methionine-binding residues include threonine 157, glycine 178, aspartate 200, and asparagine 243.

It belongs to the methyltransferase superfamily. PrmA family.

The protein resides in the cytoplasm. It catalyses the reaction L-lysyl-[protein] + 3 S-adenosyl-L-methionine = N(6),N(6),N(6)-trimethyl-L-lysyl-[protein] + 3 S-adenosyl-L-homocysteine + 3 H(+). Functionally, methylates ribosomal protein L11. This Streptococcus pneumoniae (strain 70585) protein is Ribosomal protein L11 methyltransferase.